A 1642-amino-acid polypeptide reads, in one-letter code: Coiled-coil domain-containing protein 7A (1642 aa).

The interval 21 to 51 (PYKKGLLNSSPKPKEKHNAKSKYGKNESMVL) is disordered. The LRR 1 repeat unit spans residues 161–184 (VNQMEEISKDQSNLEELQSDGKTA). A coiled-coil region spans residues 279–330 (LEKALNDQQTIESKYKQLETDFQMLIMEKTLLEAEIRRLREIERVKSAAKEE). One copy of the LRR 2 repeat lies at 1310–1333 (IKELSKTLNLDGGDIELSDFVFKT).

Exclusively expressed in the testes.

The protein is Coiled-coil domain-containing protein 7A of Mus musculus (Mouse).